A 308-amino-acid chain; its full sequence is Ribosomal RNA large subunit methyltransferase F (308 aa).

The protein belongs to the methyltransferase superfamily. METTL16/RlmF family.

The protein resides in the cytoplasm. The enzyme catalyses adenosine(1618) in 23S rRNA + S-adenosyl-L-methionine = N(6)-methyladenosine(1618) in 23S rRNA + S-adenosyl-L-homocysteine + H(+). Its function is as follows. Specifically methylates the adenine in position 1618 of 23S rRNA. The sequence is that of Ribosomal RNA large subunit methyltransferase F from Salmonella agona (strain SL483).